A 565-amino-acid chain; its full sequence is uncharacterized protein (565 aa).

This is an uncharacterized protein from Acanthamoeba polyphaga (Amoeba).